We begin with the raw amino-acid sequence, 252 residues long: 3-dehydroquinate dehydratase (252 aa).

Residues Ser-21, 46 to 48 (EWR), and Arg-82 each bind 3-dehydroquinate. The Proton donor/acceptor role is filled by His-143. Lys-170 serves as the catalytic Schiff-base intermediate with substrate. Positions 213, 232, and 236 each coordinate 3-dehydroquinate.

It belongs to the type-I 3-dehydroquinase family. In terms of assembly, homodimer.

The enzyme catalyses 3-dehydroquinate = 3-dehydroshikimate + H2O. Its pathway is metabolic intermediate biosynthesis; chorismate biosynthesis; chorismate from D-erythrose 4-phosphate and phosphoenolpyruvate: step 3/7. Involved in the third step of the chorismate pathway, which leads to the biosynthesis of aromatic amino acids. Catalyzes the cis-dehydration of 3-dehydroquinate (DHQ) and introduces the first double bond of the aromatic ring to yield 3-dehydroshikimate. In Shigella dysenteriae, this protein is 3-dehydroquinate dehydratase.